Here is a 494-residue protein sequence, read N- to C-terminus: Gabija protein GajB (494 aa).

The UvrD-like helicase ATP-binding domain occupies 1–229 (MSREQIIKDG…YHLTSNFRCC (229 aa)). 17 to 24 (AGAGSGKT) lines the ATP pocket.

It belongs to the helicase family. In terms of assembly, homodimer. Interacts with GajA; 2 GajB dimers dock at opposite sides of the GajA complex to form a 4:4 GajA-GajB assembly (GajAB). GajAB interacts with Bacillus phage Phi3T Gad1 protein; this interaction forms a 4:4:8 GajAB-Gad1 complex and leads to GajAB inhibition.

Its function is as follows. Component of antiviral defense system Gabija type I, composed of GajA and GajB. Expression of Gabija type I in B.subtilis (strain BEST7003) confers resistance to phages phi105, phi29, rho14, SpBeta and SBSphiC. Expression of Gabija type I in E.coli B (strain ATCC 11303) confers resistance to phage T7. May be a helicase or contribute to GajA activation. This is Gabija protein GajB from Bacillus cereus (strain VD045).